We begin with the raw amino-acid sequence, 273 residues long: Putative pyruvate, phosphate dikinase regulatory protein (273 aa).

Residue 153–160 (GVSRTSKS) coordinates ADP.

Belongs to the pyruvate, phosphate/water dikinase regulatory protein family. PDRP subfamily.

It carries out the reaction N(tele)-phospho-L-histidyl/L-threonyl-[pyruvate, phosphate dikinase] + ADP = N(tele)-phospho-L-histidyl/O-phospho-L-threonyl-[pyruvate, phosphate dikinase] + AMP + H(+). It catalyses the reaction N(tele)-phospho-L-histidyl/O-phospho-L-threonyl-[pyruvate, phosphate dikinase] + phosphate + H(+) = N(tele)-phospho-L-histidyl/L-threonyl-[pyruvate, phosphate dikinase] + diphosphate. In terms of biological role, bifunctional serine/threonine kinase and phosphorylase involved in the regulation of the pyruvate, phosphate dikinase (PPDK) by catalyzing its phosphorylation/dephosphorylation. This Ehrlichia canis (strain Jake) protein is Putative pyruvate, phosphate dikinase regulatory protein.